The chain runs to 203 residues: tRNA (guanine-N(7)-)-methyltransferase (203 aa).

S-adenosyl-L-methionine contacts are provided by Glu-34, Glu-59, Asp-86, and Asp-107. The active site involves Asp-107. Substrate contacts are provided by residues Lys-111, Asp-143, and 181–184 (TSYE).

This sequence belongs to the class I-like SAM-binding methyltransferase superfamily. TrmB family.

The catalysed reaction is guanosine(46) in tRNA + S-adenosyl-L-methionine = N(7)-methylguanosine(46) in tRNA + S-adenosyl-L-homocysteine. It participates in tRNA modification; N(7)-methylguanine-tRNA biosynthesis. Catalyzes the formation of N(7)-methylguanine at position 46 (m7G46) in tRNA. The protein is tRNA (guanine-N(7)-)-methyltransferase of Mycoplasmopsis pulmonis (strain UAB CTIP) (Mycoplasma pulmonis).